Reading from the N-terminus, the 627-residue chain is (+)-3-carene synthase 1, chloroplastic (627 aa).

A chloroplast-targeting transit peptide spans 1 to 36 (MSVISIVPLASKPCLYKSFISSTHEPKALRRPISTV). The Mg(2+) site is built by D378, D382, and D530. Residues 378 to 382 (DDMYD) carry the DDXXD motif motif.

It belongs to the terpene synthase family. Tpsd subfamily. Requires Mg(2+) as cofactor. Mn(2+) is required as a cofactor.

Its subcellular location is the plastid. It is found in the chloroplast. The enzyme catalyses (2E)-geranyl diphosphate = (+)-car-3-ene + diphosphate. It participates in terpene metabolism; oleoresin biosynthesis. Its function is as follows. Terpene synthase (TPS) involved in the biosynthesis of monoterpene natural products included in conifer oleoresin secretions and volatile emissions; these compounds contribute to biotic and abiotic stress defense against herbivores (e.g. insect attack by white pine weevil P.strobi) and pathogens. Catalyzes the conversion of (2E)-geranyl diphosphate (GPP) to (+)-car-3-ene. The chain is (+)-3-carene synthase 1, chloroplastic from Picea sitchensis (Sitka spruce).